The chain runs to 212 residues: Ubiquitin-like protein MDY2 (212 aa).

Residues Val-74–Pro-152 enclose the Ubiquitin-like domain. Residues Pro-150–Val-177 are disordered.

Interacts with GET4.

It localises to the cytoplasm. It is found in the cytosol. The protein localises to the nucleus. Required for efficient mating. Involved in the production of alpha-factor, the KAR9 and TUB1 location to the shmoo tip and nuclear migration into pheromone-induced shmoos. This chain is Ubiquitin-like protein MDY2 (MDY2), found in Saccharomyces cerevisiae (strain ATCC 204508 / S288c) (Baker's yeast).